Reading from the N-terminus, the 422-residue chain is Acylglycerol kinase, mitochondrial (422 aa).

Position 6 is an N6-acetyllysine (K6). The segment at 15–31 (TTAGLCLLTWGGHWLYG) is hydrophobic. Residues 58 to 199 (AQVKKATVFL…LDVLQIKGEK (142 aa)) form the DAGKc domain. A disordered region spans residues 249-271 (QASISYTGPTERPPSEPEETPVQ).

Belongs to the AGK family. In terms of assembly, component of the TIM22 complex, which core is composed of TIMM22, associated with TIMM10 (TIMM10A and/or TIMM10B), TIMM9, AGK and TIMM29. Interacts with SMIM26. Requires Mg(2+) as cofactor.

The protein localises to the mitochondrion inner membrane. It localises to the mitochondrion intermembrane space. The catalysed reaction is a monoacylglycerol + ATP = a monoacyl-sn-glycero-3-phosphate + ADP + H(+). It catalyses the reaction a 1,2-diacyl-sn-glycerol + ATP = a 1,2-diacyl-sn-glycero-3-phosphate + ADP + H(+). It carries out the reaction an N-acylsphing-4-enine + ATP = an N-acylsphing-4-enine 1-phosphate + ADP + H(+). The enzyme catalyses 1-(9Z-octadecenoyl)-sn-glycerol + ATP = 1-(9Z-octadecenoyl)-sn-glycero-3-phosphate + ADP + H(+). The catalysed reaction is 1,2-di-(9Z-octadecenoyl)-sn-glycerol + ATP = 1,2-di-(9Z-octadecenoyl)-sn-glycero-3-phosphate + ADP + H(+). It catalyses the reaction a 1-acyl-sn-glycerol + ATP = a 1-acyl-sn-glycero-3-phosphate + ADP + H(+). It carries out the reaction 1-hexadecanoyl-sn-glycerol + ATP = 1-hexadecanoyl-sn-glycero-3-phosphate + ADP + H(+). The enzyme catalyses a 2-acylglycerol + ATP = a 2-acyl-sn-glycerol 3-phosphate + ADP + H(+). The catalysed reaction is 2-(5Z,8Z,11Z,14Z-eicosatetraenoyl)-glycerol + ATP = 2-(5Z,8Z,11Z,14Z-eicosatetraenoyl)-sn-glycero-3-phosphate + ADP + H(+). It catalyses the reaction 1-(5Z,8Z,11Z,14Z-eicosatetraenoyl)-sn-glycerol + ATP = 1-(5Z,8Z,11Z,14Z-eicosatetraenoyl)-sn-glycero-3-phosphate + ADP + H(+). It carries out the reaction N-(hexanoyl)sphing-4-enine + ATP = N-hexanoylsphing-4-enine 1-phosphate + ADP + H(+). It functions in the pathway lipid metabolism; glycerolipid metabolism. In terms of biological role, lipid kinase that can phosphorylate both monoacylglycerol and diacylglycerol to form lysophosphatidic acid (LPA) and phosphatidic acid (PA), respectively. Phosphorylates ceramide but not sphingosine. Phosphorylates 1,2-dioleoylglycerol more rapidly than 2,3-dioleoylglycerol. Independently of its lipid kinase activity, acts as a component of the TIM22 complex. The TIM22 complex mediates the import and insertion of multi-pass transmembrane proteins into the mitochondrial inner membrane by forming a twin-pore translocase that uses the membrane potential as the external driving force. In the TIM22 complex, required for the import of a subset of metabolite carriers into mitochondria, such as ANT1/SLC25A4 and SLC25A24, while it is not required for the import of TIMM23. Overexpression increases the formation and secretion of LPA, resulting in transactivation of EGFR and activation of the downstream MAPK signaling pathway, leading to increased cell growth. This is Acylglycerol kinase, mitochondrial from Pongo abelii (Sumatran orangutan).